Here is a 542-residue protein sequence, read N- to C-terminus: Protein NODULATION SIGNALING PATHWAY 1 (542 aa).

The interval 73–150 (TSTTSLEPCG…SNCNSGNSKE (78 aa)) is disordered. Positions 92-103 (LPKKRNATDESS) are enriched in basic and acidic residues. A compositionally biased stretch (low complexity) spans 136-148 (AKANGSNCNSGNS). One can recognise a GRAS domain in the interval 145–532 (SGNSKEGRWA…QPVSFCSLWK (388 aa)). Residues 152 to 214 (RWAEQLLNPC…HLSSSSSSPT (63 aa)) are leucine repeat I (LRI). Residues 233-332 (LLKFYEVSPW…GYNYYPRLLG (100 aa)) are VHIID. The short motif at 269–273 (LHILD) is the VHIID element. Residues 333–357 (YAQSININLQINRIENHSLQTLNAQ) form a leucine repeat II (LRII) region. The PFYRE stretch occupies residues 367-452 (LIVCAQFRLH…RESDERRVME (86 aa)). The tract at residues 455 to 532 (AAKALTNQRE…QPVSFCSLWK (78 aa)) is SAW.

The protein belongs to the GRAS family. Highly expressed in roots.

It is found in the nucleus. In terms of biological role, transcriptional regulator essential for Nod-factor-induced gene expression. Acts downstream of calcium spiking and a calcium/calmodulin-dependent protein kinase required for activation of early nodulation gene expression. Acts as a common symbiosis gene that positively contributes to the early steps of the arbuscular mycorrhizal fungus and rhizobial infection processes in roots. Transcription factor involved in the positive regulation of the beta-carotene isomerase D27, which participates in a pathway leading to biosynthesis of strigolactones in roots. This is Protein NODULATION SIGNALING PATHWAY 1 from Lotus japonicus (Lotus corniculatus var. japonicus).